We begin with the raw amino-acid sequence, 507 residues long: Serine hydroxymethyltransferase (507 aa).

Lys283 carries the N6-(pyridoxal phosphate)lysine modification.

This sequence belongs to the SHMT family. As to quaternary structure, homotetramer. The cofactor is pyridoxal 5'-phosphate.

The enzyme catalyses (6R)-5,10-methylene-5,6,7,8-tetrahydrofolate + glycine + H2O = (6S)-5,6,7,8-tetrahydrofolate + L-serine. The protein operates within one-carbon metabolism; tetrahydrofolate interconversion. In terms of biological role, interconversion of serine and glycine. The polypeptide is Serine hydroxymethyltransferase (mel-32) (Caenorhabditis elegans).